The chain runs to 382 residues: Anhydro-N-acetylmuramic acid kinase (382 aa).

ATP is bound at residue 9 to 16; the sequence is GTSLDGID.

Belongs to the anhydro-N-acetylmuramic acid kinase family.

The enzyme catalyses 1,6-anhydro-N-acetyl-beta-muramate + ATP + H2O = N-acetyl-D-muramate 6-phosphate + ADP + H(+). It participates in amino-sugar metabolism; 1,6-anhydro-N-acetylmuramate degradation. The protein operates within cell wall biogenesis; peptidoglycan recycling. Its function is as follows. Catalyzes the specific phosphorylation of 1,6-anhydro-N-acetylmuramic acid (anhMurNAc) with the simultaneous cleavage of the 1,6-anhydro ring, generating MurNAc-6-P. Is required for the utilization of anhMurNAc either imported from the medium or derived from its own cell wall murein, and thus plays a role in cell wall recycling. This chain is Anhydro-N-acetylmuramic acid kinase, found in Bacillus cereus (strain Q1).